The chain runs to 95 residues: Aspartyl/glutamyl-tRNA(Asn/Gln) amidotransferase subunit C (95 aa).

This sequence belongs to the GatC family. As to quaternary structure, heterotrimer of A, B and C subunits.

It carries out the reaction L-glutamyl-tRNA(Gln) + L-glutamine + ATP + H2O = L-glutaminyl-tRNA(Gln) + L-glutamate + ADP + phosphate + H(+). It catalyses the reaction L-aspartyl-tRNA(Asn) + L-glutamine + ATP + H2O = L-asparaginyl-tRNA(Asn) + L-glutamate + ADP + phosphate + 2 H(+). Functionally, allows the formation of correctly charged Asn-tRNA(Asn) or Gln-tRNA(Gln) through the transamidation of misacylated Asp-tRNA(Asn) or Glu-tRNA(Gln) in organisms which lack either or both of asparaginyl-tRNA or glutaminyl-tRNA synthetases. The reaction takes place in the presence of glutamine and ATP through an activated phospho-Asp-tRNA(Asn) or phospho-Glu-tRNA(Gln). In Chloroherpeton thalassium (strain ATCC 35110 / GB-78), this protein is Aspartyl/glutamyl-tRNA(Asn/Gln) amidotransferase subunit C.